The primary structure comprises 259 residues: NADPH-dependent reductase BacG (259 aa).

Residues 12–15 (SQGI), 34–36 (SRN), 62–63 (DM), Ile-90, Lys-113, and 185–191 (GFIATDR) each bind NADP(+).

The protein belongs to the short-chain dehydrogenases/reductases (SDR) family. As to quaternary structure, homodimer.

Its subcellular location is the cytoplasm. It functions in the pathway antibiotic biosynthesis; bacilysin biosynthesis. Functionally, along with the bacABCDEF operon, BacG is involved in the biosynthesis of the nonribosomally synthesized dipeptide antibiotic bacilysin, composed of L-alanine and L-anticapsin. Bacilysin is an irreversible inactivator of the glutaminase domain of glucosamine synthetase. BacG catalyzes the stereoselective reduction of exocyclic-delta(3),delta(5)-dihydro-hydroxyphenylpyruvate (ex-H2HPP), adding a pro-S hydride equivalent to C4 position to yield tetrahydro-hydroxyphenylpyruvate (H4HPP). Although the 3Z,7R-ex-H2HPP isomer is kinetically disfavored by BacB and produced in a smaller quantity than 3E,7R-ex-H2HPP, it is the preferred substrate for the conjugate reduction reaction of BacG. In Bacillus subtilis (strain 168), this protein is NADPH-dependent reductase BacG.